The sequence spans 423 residues: 26S proteasome regulatory subunit 6A homolog (423 aa).

211-218 (GPPGTGKT) serves as a coordination point for ATP.

The protein belongs to the AAA ATPase family.

It is found in the cytoplasm. Its subcellular location is the nucleus. The 26S proteasome is involved in the ATP-dependent degradation of ubiquitinated proteins. The regulatory (or ATPase) complex confers ATP dependency and substrate specificity to the 26S complex. This Solanum lycopersicum (Tomato) protein is 26S proteasome regulatory subunit 6A homolog (TBP1).